The primary structure comprises 534 residues: Autophagic-related protein 16.2 (534 aa).

WD repeat units follow at residues 243–281 (THDG…TDAS), 288–329 (GCLG…STFS), 330–368 (GHTD…CLKS), 371–411 (VGST…ATYS), 413–452 (ELGQ…IIHL), 459–498 (KTSC…LEKV), and 504–534 (SDSA…TLWR).

It belongs to the WD repeat tipD family. As to quaternary structure, homodimer (via N-terminus). Most likely a component of a complex at least containing atg-5, lgg-3, atg-16.1 and/or atg-16.2. Interacts (via N-terminus) with atg-16.1 (via N-terminus). Interacts (via N-terminus) with atg-5. Interacts (via WD 5-6 repeats) with lgg-2; the interaction is direct. In terms of tissue distribution, expressed in neurons, pharyngeal muscles, body wall muscle cells and intestinal cells.

The protein localises to the cytoplasm. Its subcellular location is the cell membrane. Functionally, most likely a component of the atg-5-atg-12-atg-16.1/atg-16.2 complex, which is recruited to the preautophagosomal membrane and associates with lgg-2 to promote autophagosome formation. Plays a role in the recruitment of lipidated lgg-1 probably to the autophagosome membrane to promote autophagosome formation. Furthermore, association with atg-5 is required for the nucleation of lgg-1 positive autophagosomes. Although its role in autophagosome formation may be distinct to the role of atg-16.2, it functions in a partially redundant manner with atg-16.1 to regulate autophagic processes. In a daf-18/PTEN- and daf-16/FOXO-dependent manner, required for maintaining the numbers of germ stem cell progenitors in the gonad during the late phases of larval development. The chain is Autophagic-related protein 16.2 from Caenorhabditis elegans.